The chain runs to 476 residues: F-box protein At5g07670 (476 aa).

The F-box domain occupies 59 to 111 (PDFTLLLPDLILIRVIQKIPNSQRKNLSLVCKRWFRLHGRLVRSFKVSDWEFL).

This chain is F-box protein At5g07670, found in Arabidopsis thaliana (Mouse-ear cress).